The following is a 273-amino-acid chain: DnaJ homolog subfamily C member 27 (273 aa).

The tract at residues Met-1–Lys-18 is required for interaction with MAPK1. GTP-binding positions include Gly-23 to Ser-30, Asp-71 to His-75, and Asn-134 to Asp-137. The region spanning Asp-217–Lys-273 is the J domain.

Belongs to the small GTPase superfamily. Rab family. In terms of assembly, interacts directly with MAPK1 (wild-type and kinase-deficient forms). Interacts directly (in GTP-bound form) with MAP2K1 (wild-type and kinase-deficient forms).

It is found in the nucleus. Functionally, GTPase which can activate the MEK/ERK pathway and induce cell transformation when overexpressed. May act as a nuclear scaffold for MAPK1, probably by association with MAPK1 nuclear export signal leading to enhanced ERK1/ERK2 signaling. The sequence is that of DnaJ homolog subfamily C member 27 (Dnajc27) from Rattus norvegicus (Rat).